A 352-amino-acid chain; its full sequence is Staphylococcal superantigen-like 3 (352 aa).

Residues 1–30 (MKMRTIAKTSLALGLLTTGAITVTTQSVKA) form the signal peptide. Positions 61–165 (ATTQAANTRQ…TIKQAQTDMT (105 aa)) are disordered. A compositionally biased stretch (basic and acidic residues) spans 69–104 (RQERTPKLEKAPNTNEEKTSASKIEKISQPKQEEQK). Low complexity predominate over residues 114 to 141 (PKQEQSQTTTESTTPKTKVTTPPSTNTP). Residues 142 to 164 (QPMQSTKSDTPQSPTIKQAQTDM) show a composition bias toward polar residues. Residues 228 to 326 (IDVFIVLEDN…VIKMKNGGKY (99 aa)) are sialyl Lewis X-binding.

It belongs to the staphylococcal/streptococcal toxin family. Interacts with host TLR2 (via its extracellular domain).

The protein localises to the secreted. Its function is as follows. Secreted protein that plays an essential role in immune innate response inhibition by interacting with and inhibiting host TLR2. In turn, bacteria recognition by immune cells is impaired and cytokine production is inhibited. Mechanistically, by interacting with TLR2, blocks ligand binding and thus inhibits activation. Second, by interacting with an already formed TLR2-lipopeptide complex, prevents TLR heterodimerization and downstream signaling. The interaction with host TLR2 does not involve sialyl Lewis X interactions. The polypeptide is Staphylococcal superantigen-like 3 (Staphylococcus aureus (strain Newman)).